We begin with the raw amino-acid sequence, 293 residues long: CDP-abequose synthase (293 aa).

Thr-113 is a binding site for substrate. The Proton acceptor role is filled by Tyr-130.

The protein belongs to the NAD(P)-dependent epimerase/dehydratase family.

The enzyme catalyses CDP-alpha-D-abequose + NADP(+) = CDP-4-dehydro-3,6-dideoxy-alpha-D-glucose + NADPH + H(+). The protein operates within bacterial outer membrane biogenesis; LPS O-antigen biosynthesis. The protein is CDP-abequose synthase of Salmonella muenchen.